A 104-amino-acid chain; its full sequence is Large ribosomal subunit protein bL21 (104 aa).

This sequence belongs to the bacterial ribosomal protein bL21 family. As to quaternary structure, part of the 50S ribosomal subunit. Contacts protein L20.

Functionally, this protein binds to 23S rRNA in the presence of protein L20. In Thermotoga petrophila (strain ATCC BAA-488 / DSM 13995 / JCM 10881 / RKU-1), this protein is Large ribosomal subunit protein bL21.